The following is a 476-amino-acid chain: Bifunctional protein HldE (476 aa).

The ribokinase stretch occupies residues 1 to 319 (MKISLPAFEK…EALSLSHGES (319 aa)). Residue 195 to 198 (NMSE) participates in ATP binding. Residue Asp264 is part of the active site. The cytidylyltransferase stretch occupies residues 345–476 (MTNGCFDILH…AIIQNIMANQ (132 aa)).

This sequence in the N-terminal section; belongs to the carbohydrate kinase PfkB family. The protein in the C-terminal section; belongs to the cytidylyltransferase family. In terms of assembly, homodimer.

The enzyme catalyses D-glycero-beta-D-manno-heptose 7-phosphate + ATP = D-glycero-beta-D-manno-heptose 1,7-bisphosphate + ADP + H(+). It carries out the reaction D-glycero-beta-D-manno-heptose 1-phosphate + ATP + H(+) = ADP-D-glycero-beta-D-manno-heptose + diphosphate. It participates in nucleotide-sugar biosynthesis; ADP-L-glycero-beta-D-manno-heptose biosynthesis; ADP-L-glycero-beta-D-manno-heptose from D-glycero-beta-D-manno-heptose 7-phosphate: step 1/4. The protein operates within nucleotide-sugar biosynthesis; ADP-L-glycero-beta-D-manno-heptose biosynthesis; ADP-L-glycero-beta-D-manno-heptose from D-glycero-beta-D-manno-heptose 7-phosphate: step 3/4. Its function is as follows. Catalyzes the phosphorylation of D-glycero-D-manno-heptose 7-phosphate at the C-1 position to selectively form D-glycero-beta-D-manno-heptose-1,7-bisphosphate. Functionally, catalyzes the ADP transfer from ATP to D-glycero-beta-D-manno-heptose 1-phosphate, yielding ADP-D-glycero-beta-D-manno-heptose. In Shewanella pealeana (strain ATCC 700345 / ANG-SQ1), this protein is Bifunctional protein HldE.